A 206-amino-acid chain; its full sequence is LexA repressor (206 aa).

The segment at residues 28-48 (RAEIATRLGFKSANAAEEHLK) is a DNA-binding region (H-T-H motif). Active-site for autocatalytic cleavage activity residues include Ser-123 and Lys-160.

This sequence belongs to the peptidase S24 family. Homodimer.

It catalyses the reaction Hydrolysis of Ala-|-Gly bond in repressor LexA.. Its function is as follows. Represses a number of genes involved in the response to DNA damage (SOS response), including recA and lexA. In the presence of single-stranded DNA, RecA interacts with LexA causing an autocatalytic cleavage which disrupts the DNA-binding part of LexA, leading to derepression of the SOS regulon and eventually DNA repair. The sequence is that of LexA repressor from Shewanella sp. (strain MR-4).